We begin with the raw amino-acid sequence, 41 residues long: Large ribosomal subunit protein bL36A (41 aa).

Belongs to the bacterial ribosomal protein bL36 family.

The polypeptide is Large ribosomal subunit protein bL36A (Aeromonas salmonicida (strain A449)).